The primary structure comprises 215 residues: Ribose-5-phosphate isomerase A (215 aa).

Substrate-binding positions include 26–29 (TGST), 79–82 (DGAD), and 92–95 (KGGG). E101 serves as the catalytic Proton acceptor. Residue K119 coordinates substrate.

Belongs to the ribose 5-phosphate isomerase family. As to quaternary structure, homodimer.

It carries out the reaction aldehydo-D-ribose 5-phosphate = D-ribulose 5-phosphate. It participates in carbohydrate degradation; pentose phosphate pathway; D-ribose 5-phosphate from D-ribulose 5-phosphate (non-oxidative stage): step 1/1. Catalyzes the reversible conversion of ribose-5-phosphate to ribulose 5-phosphate. This chain is Ribose-5-phosphate isomerase A, found in Xanthomonas oryzae pv. oryzae (strain MAFF 311018).